The following is a 437-amino-acid chain: Exosome complex component RRP45 (437 aa).

A Phosphoserine modification is found at S65. K297 bears the N6-acetyllysine; alternate mark. A Glycyl lysine isopeptide (Lys-Gly) (interchain with G-Cter in SUMO1); alternate cross-link involves residue K297. A Glycyl lysine isopeptide (Lys-Gly) (interchain with G-Cter in SUMO2); alternate cross-link involves residue K297. A phosphoserine mark is found at S306 and S346. Positions 339-437 (IGEGIENSWG…KRRKKKRTAN (99 aa)) are disordered. Positions 349–363 (DLEDSEKEEEEEGGI) are enriched in acidic residues. A phosphoserine mark is found at S392, S394, and S407. The segment covering 413–425 (AQTSANQKAPSKS) has biased composition (polar residues). Residues 426–437 (QGKRRKKKRTAN) show a composition bias toward basic residues.

The protein belongs to the RNase PH family. As to quaternary structure, component of the RNA exosome core complex (Exo-9), composed of EXOSC1, EXOSC2, EXOSC3, EXOSC4, EXOSC5, EXOSC6, EXOSC7, EXOSC8 and EXOSC9; within the complex interacts with EXOSC3, EXOSC4, EXOSC5 and DIS3. The catalytically inactive RNA exosome core complex (Exo-9) associates with the catalytic subunit EXOSC10/RRP6. Exo-9 may associate with DIS3 to form the nucleolar exosome complex, or DIS3L to form the cytoplasmic exosome complex. Exo-9 is formed by a hexameric base ring consisting of the heterodimers EXOSC4-EXOSC9, EXOSC5-EXOSC8 and EXOSC6-EXOSC7, and a cap ring consisting of EXOSC1, EXOSC2 and EXOSC3. The RNA exosome complex associates with cofactors C1D/RRP47, MPHOSPH6/MPP6 and MTREX/MTR4. Interacts (via C-terminus region) with SETX (via N-terminus domain); the interaction enhances SETX sumoylation. Interacts with DIS3; the interaction is direct.

It localises to the cytoplasm. Its subcellular location is the nucleus. The protein resides in the nucleolus. The protein localises to the nucleoplasm. Its function is as follows. Non-catalytic component of the RNA exosome complex which has 3'-&gt;5' exoribonuclease activity and participates in a multitude of cellular RNA processing and degradation events. In the nucleus, the RNA exosome complex is involved in proper maturation of stable RNA species such as rRNA, snRNA and snoRNA, in the elimination of RNA processing by-products and non-coding 'pervasive' transcripts, such as antisense RNA species and promoter-upstream transcripts (PROMPTs), and of mRNAs with processing defects, thereby limiting or excluding their export to the cytoplasm. The RNA exosome may be involved in Ig class switch recombination (CSR) and/or Ig variable region somatic hypermutation (SHM) by targeting AICDA deamination activity to transcribed dsDNA substrates. In the cytoplasm, the RNA exosome complex is involved in general mRNA turnover and specifically degrades inherently unstable mRNAs containing AU-rich elements (AREs) within their 3' untranslated regions, and in RNA surveillance pathways, preventing translation of aberrant mRNAs. It seems to be involved in degradation of histone mRNA. The catalytic inactive RNA exosome core complex of 9 subunits (Exo-9) is proposed to play a pivotal role in the binding and presentation of RNA for ribonucleolysis, and to serve as a scaffold for the association with catalytic subunits and accessory proteins or complexes. EXOSC9 binds to ARE-containing RNAs. The chain is Exosome complex component RRP45 (Exosc9) from Rattus norvegicus (Rat).